Consider the following 247-residue polypeptide: Ubiquinone biosynthesis O-methyltransferase (247 aa).

The S-adenosyl-L-methionine site is built by arginine 45, glycine 65, aspartate 86, and leucine 130.

It belongs to the methyltransferase superfamily. UbiG/COQ3 family.

It catalyses the reaction a 3-demethylubiquinol + S-adenosyl-L-methionine = a ubiquinol + S-adenosyl-L-homocysteine + H(+). The catalysed reaction is a 3-(all-trans-polyprenyl)benzene-1,2-diol + S-adenosyl-L-methionine = a 2-methoxy-6-(all-trans-polyprenyl)phenol + S-adenosyl-L-homocysteine + H(+). Its pathway is cofactor biosynthesis; ubiquinone biosynthesis. Its function is as follows. O-methyltransferase that catalyzes the 2 O-methylation steps in the ubiquinone biosynthetic pathway. This is Ubiquinone biosynthesis O-methyltransferase from Alkalilimnicola ehrlichii (strain ATCC BAA-1101 / DSM 17681 / MLHE-1).